A 377-amino-acid chain; its full sequence is Probable protein phosphatase 2C 61 (377 aa).

One can recognise a PPM-type phosphatase domain in the interval A30–L338. Positions 64, 65, 269, and 329 each coordinate Mn(2+).

The protein belongs to the PP2C family. Mg(2+) is required as a cofactor. The cofactor is Mn(2+).

The enzyme catalyses O-phospho-L-seryl-[protein] + H2O = L-seryl-[protein] + phosphate. It catalyses the reaction O-phospho-L-threonyl-[protein] + H2O = L-threonyl-[protein] + phosphate. This chain is Probable protein phosphatase 2C 61, found in Oryza sativa subsp. japonica (Rice).